The sequence spans 347 residues: Phenylalanine--tRNA ligase alpha subunit (347 aa).

A Mg(2+)-binding site is contributed by E261.

The protein belongs to the class-II aminoacyl-tRNA synthetase family. Phe-tRNA synthetase alpha subunit type 1 subfamily. Tetramer of two alpha and two beta subunits. Mg(2+) is required as a cofactor.

Its subcellular location is the cytoplasm. It carries out the reaction tRNA(Phe) + L-phenylalanine + ATP = L-phenylalanyl-tRNA(Phe) + AMP + diphosphate + H(+). This chain is Phenylalanine--tRNA ligase alpha subunit, found in Streptococcus thermophilus (strain CNRZ 1066).